The sequence spans 69 residues: DNA gyrase inhibitor YacG (69 aa).

Residues C12, C15, C31, and C35 each coordinate Zn(2+). The disordered stretch occupies residues 49-69; sequence RVPVEPKPDEGETPDQAERPQ.

This sequence belongs to the DNA gyrase inhibitor YacG family. As to quaternary structure, interacts with GyrB. The cofactor is Zn(2+).

Its function is as follows. Inhibits all the catalytic activities of DNA gyrase by preventing its interaction with DNA. Acts by binding directly to the C-terminal domain of GyrB, which probably disrupts DNA binding by the gyrase. The polypeptide is DNA gyrase inhibitor YacG (Thiobacillus denitrificans (strain ATCC 25259 / T1)).